Here is a 361-residue protein sequence, read N- to C-terminus: Caspase activity and apoptosis inhibitor 1 (361 aa).

Positions 1 to 14 (MTGKKSSREKRRKR) are enriched in basic residues. Disordered regions lie at residues 1–28 (MTGK…APDI) and 67–100 (GGSG…GSLQ). The segment covering 19–28 (AAAALAAPDI) has biased composition (low complexity). Ser-89 bears the Phosphoserine mark. Phosphothreonine is present on Thr-90. Residue Lys-104 forms a Glycyl lysine isopeptide (Lys-Gly) (interchain with G-Cter in SUMO2) linkage. Residues Ser-120 and Ser-203 each carry the phosphoserine modification. Disordered stretches follow at residues 198-218 (DNGM…MGSD) and 230-331 (ASSV…DVQP). The span at 199–210 (NGMDSDMEEEAD) shows a compositional bias: acidic residues. Residues 234 to 251 (RENKQPEGLELKQGKGED) show a composition bias toward basic and acidic residues. The span at 272–281 (EEAAAPEAPE) shows a compositional bias: low complexity. Residues 281–311 (ENTVQSEAGQIDDLEKDIEKSVNEILGLAES) are a coiled coil. Ser-312 bears the Phosphoserine mark.

In terms of tissue distribution, ubiquitous.

Its function is as follows. Anti-apoptotic protein that modulates a caspase-10 dependent mitochondrial caspase-3/9 feedback amplification loop. The polypeptide is Caspase activity and apoptosis inhibitor 1 (CAAP1) (Homo sapiens (Human)).